The primary structure comprises 909 residues: GTPase activating protein homolog 4 (909 aa).

Residues 1 to 257 enclose the F-BAR domain; that stretch reads MASLIGSAKL…PTPDFQFESC (257 aa). Residues 322–513 form the Rho-GAP domain; sequence IPIEEIMFKQ…LIIEGYLKLS (192 aa). Residues 529–909 are disordered; that stretch reads IPSFSNNNNN…QRVPPPPSQS (381 aa). Composition is skewed to low complexity over residues 533–562 and 571–602; these read SNNN…ITTN and SSTT…TPQQ. Over residues 609-625 the composition is skewed to pro residues; it reads SYQPPQPPPTMAPPPLF. Over residues 651 to 674 the composition is skewed to polar residues; that stretch reads QYTQSSSNLPPIQLGVTNSPSKPQ. Residues 672-809 are a coiled coil; it reads KPQLSDKQKE…QQLQQQSNGS (138 aa). Residues 675–716 are compositionally biased toward basic and acidic residues; it reads LSDKQKEKEKEKEKEKEKEKEREKEKEKEKEKEKEKEKEKEK. The segment covering 723 to 741 has biased composition (low complexity); sequence SSSTSPNSSSLSISNFLSS. The segment covering 742–765 has biased composition (basic and acidic residues); it reads NKDKDKEKDKEKEKEKEKEKDKEI. The segment covering 767–785 has biased composition (polar residues); that stretch reads ATNSTPEKPVSNRMSLIFS. Low complexity-rich tracts occupy residues 786–828 and 843–892; these read QQLQ…MSPS and SGTS…ELKS.

The protein localises to the cytoplasm. It localises to the contractile vacuole. In terms of biological role, rho GTPase-activating protein involved in the signal transduction pathway. The protein is GTPase activating protein homolog 4 (mgp4) of Dictyostelium discoideum (Social amoeba).